Here is a 97-residue protein sequence, read N- to C-terminus: Aspartyl/glutamyl-tRNA(Asn/Gln) amidotransferase subunit C (97 aa).

The protein belongs to the GatC family. As to quaternary structure, heterotrimer of A, B and C subunits.

It catalyses the reaction L-glutamyl-tRNA(Gln) + L-glutamine + ATP + H2O = L-glutaminyl-tRNA(Gln) + L-glutamate + ADP + phosphate + H(+). The enzyme catalyses L-aspartyl-tRNA(Asn) + L-glutamine + ATP + H2O = L-asparaginyl-tRNA(Asn) + L-glutamate + ADP + phosphate + 2 H(+). In terms of biological role, allows the formation of correctly charged Asn-tRNA(Asn) or Gln-tRNA(Gln) through the transamidation of misacylated Asp-tRNA(Asn) or Glu-tRNA(Gln) in organisms which lack either or both of asparaginyl-tRNA or glutaminyl-tRNA synthetases. The reaction takes place in the presence of glutamine and ATP through an activated phospho-Asp-tRNA(Asn) or phospho-Glu-tRNA(Gln). This Thermosynechococcus vestitus (strain NIES-2133 / IAM M-273 / BP-1) protein is Aspartyl/glutamyl-tRNA(Asn/Gln) amidotransferase subunit C.